The sequence spans 395 residues: GA-binding protein subunit beta-1 (395 aa).

The residue at position 2 (serine 2) is an N-acetylserine. ANK repeat units lie at residues 5 to 34 (DLGK…PFTT) and 37 to 66 (LGTS…SRDA). Lysine 69 carries the post-translational modification N6-acetyllysine. ANK repeat units lie at residues 70-99 (VDRT…DVNA), 103-132 (LKMT…DVHT), and 136-166 (FCKT…QINT). The transcription activation and HCFC1 interaction stretch occupies residues 258–327 (DGAIQQVVSS…ETVISEEPPA (70 aa)). Lysine 352 and lysine 381 each carry N6-acetyllysine.

As to quaternary structure, heterotetramer of two alpha and two beta subunits. Interacts with HCFC1, causing repression of transcriptional activity. Post-translationally, acetylated by EP300/p300. Deacetylated by SIRT7, promoting heterotetramerization and activity.

The protein localises to the nucleus. Functionally, transcription factor capable of interacting with purine rich repeats (GA repeats). Acts as a master regulator of nuclear-encoded mitochondrial genes. In terms of biological role, (Microbial infection) Necessary for the expression of the Adenovirus E4 gene. The protein is GA-binding protein subunit beta-1 (GABPB1) of Homo sapiens (Human).